The primary structure comprises 670 residues: Leiomodin-3 (670 aa).

Disordered regions lie at residues 34–72, 94–120, 139–165, and 202–274; these read EMDD…EEID, EIAP…GSFD, EEER…EDKV, and EDKV…NWVP. Basic and acidic residues-rich tracts occupy residues 40-63, 97-112, 153-163, 205-214, and 249-261; these read PDER…RDCT, PDER…DQTD, TNEEHEAKNED, VCDKPVKTDL, and TETK…KEDS. Residues 150 to 183 are a coiled coil; the sequence is SQKTNEEHEAKNEDKVEELELVYEEIVEEVEGGQ. Residues 464–494 adopt a coiled-coil conformation; it reads DRQRQQRMEEQKLQQMKEQRKVMEMYEDSLN. The tract at residues 517–556 is disordered; that stretch reads NGAEDIPEDSPEPSPQPSPPHQLCKTQHLAPQQHPPNLST. Positions 637 to 656 constitute a WH2 domain; that stretch reads PRDHLLSEIRQSNVAYLKAV.

Belongs to the tropomodulin family. As to expression, expressed in muscle (at protein level).

The protein resides in the cytoplasm. It is found in the myofibril. It localises to the sarcomere. The protein localises to the a band. Its subcellular location is the m line. The protein resides in the cytoskeleton. Its function is as follows. Essential for the organization of sarcomeric thin filaments in skeletal muscle. This chain is Leiomodin-3, found in Danio rerio (Zebrafish).